The sequence spans 754 residues: Gelsolin, cytoplasmic (754 aa).

Positions M1–G120 are actin-severing. Residues F22–G71 form a Gelsolin-like 1 repeat. An actin-actin interfilament contact point region spans residues D68–G71. Residues L101–K108 and R133–R141 each bind a 1,2-diacyl-sn-glycero-3-phospho-(1D-myo-inositol-4,5-bisphosphate). The Gelsolin-like 2 repeat unit spans residues I143–L183. A disordered region spans residues T209–D238. Positions A210–P220 are enriched in low complexity. 4 Gelsolin-like repeats span residues N266–V306, L414–A463, F538–A580, and L643–E684. The interval L386–A751 is actin-binding, Ca-sensitive. G430, D431, E461, D556, E578, D659, D660, and E682 together coordinate Ca(2+).

Belongs to the villin/gelsolin family. In terms of tissue distribution, tail muscle.

Its subcellular location is the cytoplasm. It localises to the cytoskeleton. Functionally, calcium-regulated, actin-modulating protein that binds to the plus (or barbed) ends of actin monomers or filaments, preventing monomer exchange (end-blocking or capping). It can promote the assembly of monomers into filaments (nucleation) as well as sever filaments already formed. This Homarus americanus (American lobster) protein is Gelsolin, cytoplasmic.